The following is a 337-amino-acid chain: Glyceraldehyde-3-phosphate dehydrogenase (337 aa).

NAD(+)-binding positions include 13-14 (RI), Asp-35, and Arg-80. D-glyceraldehyde 3-phosphate contacts are provided by residues 150–152 (SCT), Thr-181, 210–211 (TG), and Arg-233. The Nucleophile role is filled by Cys-151. Asn-315 contacts NAD(+).

This sequence belongs to the glyceraldehyde-3-phosphate dehydrogenase family. As to quaternary structure, homotetramer.

The protein localises to the cytoplasm. It catalyses the reaction D-glyceraldehyde 3-phosphate + phosphate + NAD(+) = (2R)-3-phospho-glyceroyl phosphate + NADH + H(+). The protein operates within carbohydrate degradation; glycolysis; pyruvate from D-glyceraldehyde 3-phosphate: step 1/5. The protein is Glyceraldehyde-3-phosphate dehydrogenase (GPDA) of Colletotrichum lindemuthianum (Bean anthracnose fungus).